Reading from the N-terminus, the 219-residue chain is 2-C-methyl-D-erythritol 4-phosphate cytidylyltransferase (219 aa).

The protein belongs to the IspD/TarI cytidylyltransferase family. IspD subfamily.

It catalyses the reaction 2-C-methyl-D-erythritol 4-phosphate + CTP + H(+) = 4-CDP-2-C-methyl-D-erythritol + diphosphate. Its pathway is isoprenoid biosynthesis; isopentenyl diphosphate biosynthesis via DXP pathway; isopentenyl diphosphate from 1-deoxy-D-xylulose 5-phosphate: step 2/6. Functionally, catalyzes the formation of 4-diphosphocytidyl-2-C-methyl-D-erythritol from CTP and 2-C-methyl-D-erythritol 4-phosphate (MEP). This is 2-C-methyl-D-erythritol 4-phosphate cytidylyltransferase from Chlamydia trachomatis serovar D (strain ATCC VR-885 / DSM 19411 / UW-3/Cx).